The chain runs to 1064 residues: Serine protease inhibitor Kazal-type 5 (1064 aa).

The first 22 residues, methionine 1–serine 22, serve as a signal peptide directing secretion. A Kazal-like 1; atypical domain is found at glutamate 28 to cysteine 66. Intrachain disulfides connect cysteine 30–cysteine 66, cysteine 44–cysteine 63, cysteine 97–cysteine 133, cysteine 111–cysteine 130, cysteine 119–cysteine 151, cysteine 161–cysteine 197, cysteine 175–cysteine 194, cysteine 225–cysteine 261, cysteine 239–cysteine 258, cysteine 297–cysteine 333, cysteine 311–cysteine 330, cysteine 367–cysteine 403, cysteine 381–cysteine 400, cysteine 437–cysteine 473, cysteine 451–cysteine 470, cysteine 496–cysteine 532, cysteine 510–cysteine 529, cysteine 567–cysteine 603, cysteine 581–cysteine 600, cysteine 632–cysteine 668, and cysteine 646–cysteine 665. 14 Kazal-like domains span residues alanine 91–serine 153, asparagine 155–isoleucine 216, asparagine 219–glutamate 285, arginine 291–arginine 352, threonine 361–asparagine 423, alanine 431–arginine 489, glutamate 490–glycine 551, glutamate 561–lysine 622, glutamate 626–arginine 688, glycine 701–tyrosine 757, glutamate 768–serine 830, asparagine 843–serine 905, asparagine 910–serine 971, and serine 987–glutamate 1048. Positions asparagine 676–arginine 688 are enriched in basic and acidic residues. The tract at residues asparagine 676 to aspartate 705 is disordered. Intrachain disulfides connect cysteine 707/cysteine 743, cysteine 721/cysteine 740, cysteine 774/cysteine 810, cysteine 788/cysteine 807, cysteine 849/cysteine 885, and cysteine 863/cysteine 882. Residues alanine 751–aspartate 775 are disordered. Positions alanine 818–cysteine 849 are disordered. Residues glutamate 895 to serine 905 are compositionally biased toward basic and acidic residues. The interval glutamate 895–glutamate 915 is disordered. 2 disulfides stabilise this stretch: cysteine 916-cysteine 952 and cysteine 930-cysteine 949. Over residues glutamine 967–glutamine 977 the composition is skewed to basic and acidic residues. Residues glutamine 967–serine 987 are disordered. 3 disulfide bridges follow: cysteine 993-cysteine 1028, cysteine 1006-cysteine 1025, and cysteine 1014-cysteine 1046. Residues arginine 1041–glutamate 1064 are disordered.

Post-translationally, proteolytically processed by furin in individual domains (D1, D5, D6, D8 through D11, and D9 through D15) exhibiting various inhibitory potentials for multiple proteases. As to expression, highly expressed in the thymus and stratum corneum. Also found in the oral mucosa, parathyroid gland, Bartholin's glands, tonsils, and vaginal epithelium. Very low levels are detected in lung, kidney, and prostate.

The protein resides in the secreted. Functionally, serine protease inhibitor, probably important for the anti-inflammatory and/or antimicrobial protection of mucous epithelia. Contribute to the integrity and protective barrier function of the skin by regulating the activity of defense-activating and desquamation-involved proteases. Inhibits KLK5, it's major target, in a pH-dependent manner. Inhibits KLK7, KLK14 CASP14, and trypsin. The sequence is that of Serine protease inhibitor Kazal-type 5 (SPINK5) from Homo sapiens (Human).